Here is a 1364-residue protein sequence, read N- to C-terminus: DNA-directed RNA polymerase subunit beta' (1364 aa).

The Zn(2+) site is built by Cys250, Cys317, Cys324, and Cys327. The disordered stretch occupies residues 1318 to 1342 (TRHNIDPSASTNAAFTRPDVDNELK).

It belongs to the RNA polymerase beta' chain family. RpoC2 subfamily. As to quaternary structure, in cyanobacteria the RNAP catalytic core is composed of 2 alpha, 1 beta, 1 beta', 1 gamma and 1 omega subunit. When a sigma factor is associated with the core the holoenzyme is formed, which can initiate transcription. The cofactor is Zn(2+).

The enzyme catalyses RNA(n) + a ribonucleoside 5'-triphosphate = RNA(n+1) + diphosphate. Its function is as follows. DNA-dependent RNA polymerase catalyzes the transcription of DNA into RNA using the four ribonucleoside triphosphates as substrates. The protein is DNA-directed RNA polymerase subunit beta' of Synechococcus sp. (strain CC9902).